Here is a 645-residue protein sequence, read N- to C-terminus: Glucans biosynthesis glucosyltransferase H (645 aa).

A compositionally biased stretch (polar residues) spans 1-13 (MDGTVTPSPTTTA). The disordered stretch occupies residues 1-32 (MDGTVTPSPTTTAMPPVSALDAGTPTLPPEAP). Transmembrane regions (helical) follow at residues 64–84 (LIGG…SVLW), 98–118 (LFVL…AGFV), 423–443 (APMW…GGGI), 465–485 (AIWI…LGYI), 504–524 (AVSI…VMYL), 559–579 (YGGL…VSPA), and 580–600 (LAAW…VVAL).

It belongs to the glycosyltransferase 2 family. OpgH subfamily.

The protein resides in the cell inner membrane. It functions in the pathway glycan metabolism; osmoregulated periplasmic glucan (OPG) biosynthesis. Its function is as follows. Involved in the biosynthesis of osmoregulated periplasmic glucans (OPGs). The chain is Glucans biosynthesis glucosyltransferase H from Xanthomonas euvesicatoria pv. vesicatoria (strain 85-10) (Xanthomonas campestris pv. vesicatoria).